We begin with the raw amino-acid sequence, 630 residues long: tRNA uridine 5-carboxymethylaminomethyl modification enzyme MnmG (630 aa).

FAD-binding positions include 13–18, Val-125, and Ser-180; that span reads GGGHAG. 273–287 is a binding site for NAD(+); that stretch reads GPRYCPSIEDKIHRF. Gln-370 contributes to the FAD binding site.

It belongs to the MnmG family. In terms of assembly, homodimer. Heterotetramer of two MnmE and two MnmG subunits. It depends on FAD as a cofactor.

The protein localises to the cytoplasm. Its function is as follows. NAD-binding protein involved in the addition of a carboxymethylaminomethyl (cmnm) group at the wobble position (U34) of certain tRNAs, forming tRNA-cmnm(5)s(2)U34. In Shewanella woodyi (strain ATCC 51908 / MS32), this protein is tRNA uridine 5-carboxymethylaminomethyl modification enzyme MnmG.